The primary structure comprises 160 residues: Arginine repressor (160 aa).

Belongs to the ArgR family.

It is found in the cytoplasm. The protein operates within amino-acid biosynthesis; L-arginine biosynthesis [regulation]. Functionally, regulates arginine biosynthesis genes. The protein is Arginine repressor of Anaeromyxobacter sp. (strain K).